The primary structure comprises 411 residues: MQCSWKAVLLLALASIAIQYTAIRTFTAKSFHTCPGLTDTGLAERLCEEGPTFSYNLSRKTHVLILATTRSGSSFVGQLFNQHMDVFYLFEPLYHVQNTLIPRFTQGKSPADRRVMLGASRDLLRSLYDCDLYFLENYIKPPPVNHTTNRVFRRGASRVLCSRPVCDPPGSSDLILEEGDCVRMCGLLNLTLAAEACRERSHVAIKTVRVPEVNDLRALVEDPRLNLKVIQLVRDPRGILASRSETFRDTYRLWRLWYGTGRKPYNLDVTQLTTVCEDFSSSVSTGLMRPSWLKGKYMLVRYEDLARNPMKKTEEIYEFLGIPLDSHVAHWIQNNTRGDPTLGKHKYSTVRNSAATAEKWRFRLSYDIVAFAQNACQQVLAQLGYKMANSEEELKNPAISLVEERDFRPFL.

Topologically, residues 1 to 2 (MQ) are cytoplasmic. Residues 3-23 (CSWKAVLLLALASIAIQYTAI) form a helical; Signal-anchor for type II membrane protein membrane-spanning segment. Topologically, residues 24-411 (RTFTAKSFHT…VEERDFRPFL (388 aa)) are lumenal. Asn-56 carries N-linked (GlcNAc...) asparagine glycosylation. 69-75 (TRSGSSF) is a binding site for 3'-phosphoadenylyl sulfate. N-linked (GlcNAc...) asparagine glycosylation is found at Asn-145 and Asn-189. Residue 234–242 (RDPRGILAS) participates in 3'-phosphoadenylyl sulfate binding. Asn-334 carries an N-linked (GlcNAc...) asparagine glycan. Residues 337 to 339 (RGD) carry the Cell attachment site motif.

The protein belongs to the sulfotransferase 1 family. Gal/GlcNAc/GalNAc subfamily. In terms of tissue distribution, broadly expressed with highest levels in central nervous system. Expressed in cortex (at protein level). Expressed in high endothelial venules in peripheral lymph nodes, mesenteric lymph nodes and Peyer's patches.

The protein resides in the golgi apparatus membrane. It carries out the reaction 3'-phosphoadenylyl sulfate + keratan = adenosine 3',5'-bisphosphate + keratan 6'-sulfate.. It functions in the pathway glycan metabolism. Sulfotransferase that utilizes 3'-phospho-5'-adenylyl sulfate (PAPS) as sulfonate donor to catalyze the transfer of sulfate to position 6 of internal galactose (Gal) residues of keratan. Cooperates with B4GALT4 and B3GNT7 glycosyltransferases and CHST6 sulfotransferase to construct and elongate disulfated disaccharide unit [-&gt;3(6-sulfoGalbeta)1-&gt;4(6-sulfoGlcNAcbeta)1-&gt;] within keratan sulfate polymer. Has a preference for sulfating keratan sulfate, but it also transfers sulfate to the unsulfated polymer. Involved in biosynthesis of phosphacan, a major keratan sulfate proteoglycan in the developing brain. Involved in biosynthesis of 6-sulfoGalbeta-containing O-linked glycans in high endothelial venules of lymph nodes. May act in a synergistic manner with CHST4 to generate sialyl 6',6-disulfo Lewis X motif, a recognition determinant for immune cell receptors implicated in leukocyte trafficking. Catalyzes sulfation of N-acetyllactosamine (LacNAc) oligosaccharides with highest efficiency for sialylated LacNAc structures. The protein is Carbohydrate sulfotransferase 1 (Chst1) of Mus musculus (Mouse).